The following is a 695-amino-acid chain: Follicle-stimulating hormone receptor (695 aa).

The first 17 residues, 1-17 (MALFLVALLAFLSLGSG), serve as a signal peptide directing secretion. 2 disulfides stabilise this stretch: cysteine 18-cysteine 25 and cysteine 23-cysteine 32. The LRRNT domain occupies 18 to 46 (CHHRLCHCSNGVFLCQDSKVTEMPSDLPR). Residues 18 to 366 (CHHRLCHCSN…EDIMGYDILR (349 aa)) are Extracellular-facing. LRR repeat units follow at residues 48–70 (AVELRFVLTKLRVIPEGAFSGFG), 71–93 (DLEKIEISQNDVLEVIEANVFSN), 96–118 (KLHEIRIEKANNLLYIDPDAFQN), 121–142 (NLRYLLISNTGIKHLPAVHKIQ), 143–167 (SLQKVLLDIQDNINIHTVERNSFMG), 171–192 (ESMIVWLSKNGIQEIHNCAFNG), 194–216 (QLDELNLSDNSNLEELPNDVFQG), 219–239 (GPVILDISRTRIRSLPSYGLE), and 240–262 (NLKKLRAKSTYHLKKLPSLEKFV). N-linked (GlcNAc...) asparagine glycosylation is found at asparagine 191 and asparagine 199. 4 cysteine pairs are disulfide-bonded: cysteine 275–cysteine 346, cysteine 276–cysteine 292, cysteine 276–cysteine 356, and cysteine 292–cysteine 338. N-linked (GlcNAc...) asparagine glycosylation is present at asparagine 293. At tyrosine 335 the chain carries Sulfotyrosine. Residues 367-387 (VLIWFISILAITGNILVLVIL) traverse the membrane as a helical segment. The Cytoplasmic portion of the chain corresponds to 388-398 (ITSQYKLTVPR). Residues 399–421 (FLMCNLAFADLCIGIYLLLIASV) traverse the membrane as a helical segment. Topologically, residues 422–443 (DVHTKSQYHNYAIDWQTGAGCD) are extracellular. Cysteine 442 and cysteine 517 form a disulfide bridge. A helical transmembrane segment spans residues 444-465 (AAGFFTVFASELSVYTLTAITL). The Cytoplasmic portion of the chain corresponds to 466–485 (ERWHTITHAMQLECKVHVRH). A helical transmembrane segment spans residues 486–508 (AASIMLVGWVFAFAVALFPIFGI). Over 509-528 (SSYMKVSICLPMDIDSPLSQ) the chain is Extracellular. Residues 529-550 (LYVMSLLVLNVLAFVVICGCYT) traverse the membrane as a helical segment. At 551-573 (HIYLTVRNPNITSSSSDTKIAKR) the chain is on the cytoplasmic side. A helical transmembrane segment spans residues 574-597 (MAMLIFTDFLCMAPISFFAISASL). Residues 598–608 (KVPLITVSKSK) lie on the Extracellular side of the membrane. A helical membrane pass occupies residues 609–630 (ILLVLFYPINSCANPFLYAIFT). At 631–695 (RNFRRDFFIL…LIPLRHLAKN (65 aa)) the chain is on the cytoplasmic side.

Belongs to the G-protein coupled receptor 1 family. FSH/LSH/TSH subfamily. As to quaternary structure, homotrimer. Functions as a homotrimer binding the FSH hormone heterodimer composed of CGA and FSHB. Interacts with ARRB2. Interacts with APPL2; interaction is independent of follicle stimulating hormone stimulation. In terms of processing, N-glycosylated; indirectly required for FSH-binding, possibly via a conformational change that allows high affinity binding of hormone. Sulfated. Isoform FSH-R3 is expressed in ovary and testis, but not in kidney (at protein level).

It localises to the cell membrane. G protein-coupled receptor for follitropin, the follicle-stimulating hormone. The activity of isoform FSH-R1 is mediated by G proteins which activate adenylate cyclase. Isoform FSH-R2 and isoform FSH-R3 also bind FSH, but this does not result in activation of adenylate cyclase. Isoform FSH-R3 may be involved in calcium signaling. Through cAMP production activates the downstream PI3K-AKT and ERK1/ERK2 signaling pathways. This Ovis aries (Sheep) protein is Follicle-stimulating hormone receptor (FSHR).